The chain runs to 118 residues: Thioredoxin H-type (118 aa).

In terms of domain architecture, Thioredoxin spans 2-114 (AAEEGQVIGC…LQQTIAKHMA (113 aa)). Residues Cys40 and Cys43 each act as nucleophile in the active site. A disulfide bridge links Cys40 with Cys43.

The protein belongs to the thioredoxin family. Plant H-type subfamily.

The protein localises to the cytoplasm. Functionally, participates in various redox reactions through the reversible oxidation of the active center dithiol to a disulfide. The H form is known to activate a number of cytosolic enzymes. The sequence is that of Thioredoxin H-type from Ricinus communis (Castor bean).